The chain runs to 234 residues: Purine nucleoside phosphorylase DeoD-type (234 aa).

Residue His-5 participates in a purine D-ribonucleoside binding. Phosphate contacts are provided by residues Gly-21, Arg-25, Arg-44, and 88 to 91 (RIGT). Residues 180 to 182 (DME) and 204 to 205 (SD) contribute to the a purine D-ribonucleoside site. Asp-205 functions as the Proton donor in the catalytic mechanism.

This sequence belongs to the PNP/UDP phosphorylase family. Homohexamer; trimer of homodimers.

The enzyme catalyses a purine D-ribonucleoside + phosphate = a purine nucleobase + alpha-D-ribose 1-phosphate. It catalyses the reaction a purine 2'-deoxy-D-ribonucleoside + phosphate = a purine nucleobase + 2-deoxy-alpha-D-ribose 1-phosphate. Catalyzes the reversible phosphorolytic breakdown of the N-glycosidic bond in the beta-(deoxy)ribonucleoside molecules, with the formation of the corresponding free purine bases and pentose-1-phosphate. The protein is Purine nucleoside phosphorylase DeoD-type of Buchnera aphidicola subsp. Acyrthosiphon pisum (strain 5A).